A 229-amino-acid polypeptide reads, in one-letter code: ATP synthase subunit a 1 (229 aa).

Transmembrane regions (helical) follow at residues 25 to 45 (ADAV…SFLA), 86 to 106 (VATV…PGFF), 111 to 131 (NINT…VVGI), 142 to 162 (FCGP…IGHL), 181 to 201 (LVLI…MMLM), and 202 to 222 (GVLV…IYIQ).

Belongs to the ATPase A chain family. F-type ATPases have 2 components, CF(1) - the catalytic core - and CF(0) - the membrane proton channel. CF(1) has five subunits: alpha(3), beta(3), gamma(1), delta(1), epsilon(1). CF(0) has three main subunits: a(1), b(2) and c(9-12). The alpha and beta chains form an alternating ring which encloses part of the gamma chain. CF(1) is attached to CF(0) by a central stalk formed by the gamma and epsilon chains, while a peripheral stalk is formed by the delta and b chains.

The protein localises to the cell inner membrane. In terms of biological role, key component of the proton channel; it plays a direct role in the translocation of protons across the membrane. The protein is ATP synthase subunit a 1 of Pelobacter propionicus (strain DSM 2379 / NBRC 103807 / OttBd1).